A 668-amino-acid polypeptide reads, in one-letter code: tRNA 5-methylaminomethyl-2-thiouridine biosynthesis bifunctional protein MnmC (668 aa).

Positions 1 to 245 are tRNA (mnm(5)s(2)U34)-methyltransferase; sequence MKHYSIQPAN…KREMLCGVME (245 aa). Positions 270 to 668 are FAD-dependent cmnm(5)s(2)U34 oxidoreductase; the sequence is IGGGIASALL…LLKGKAVKAG (399 aa).

This sequence in the N-terminal section; belongs to the methyltransferase superfamily. tRNA (mnm(5)s(2)U34)-methyltransferase family. The protein in the C-terminal section; belongs to the DAO family. The cofactor is FAD.

The protein resides in the cytoplasm. The enzyme catalyses 5-aminomethyl-2-thiouridine(34) in tRNA + S-adenosyl-L-methionine = 5-methylaminomethyl-2-thiouridine(34) in tRNA + S-adenosyl-L-homocysteine + H(+). Catalyzes the last two steps in the biosynthesis of 5-methylaminomethyl-2-thiouridine (mnm(5)s(2)U) at the wobble position (U34) in tRNA. Catalyzes the FAD-dependent demodification of cmnm(5)s(2)U34 to nm(5)s(2)U34, followed by the transfer of a methyl group from S-adenosyl-L-methionine to nm(5)s(2)U34, to form mnm(5)s(2)U34. In Escherichia coli (strain UTI89 / UPEC), this protein is tRNA 5-methylaminomethyl-2-thiouridine biosynthesis bifunctional protein MnmC.